Reading from the N-terminus, the 181-residue chain is Histone deacetylase complex subunit SAP30L-B (181 aa).

2 cysteine pairs are disulfide-bonded: C26–C27 and C35–C71. The Atypical zinc finger occupies 26-74; sequence CCLIDGGERCPRPAGNASFSKRVQKSISQKKLKLDIDKSVRHLYICDFH. The interval 82–103 is disordered; sequence RNKRKRKTSDDGGDSPEHETDV. The Nuclear localization signal (NLS) signature appears at 83-88; the sequence is NKRKRK. The segment at 85–87 is important for DNA and phosphoinositide binding; sequence RKR.

It belongs to the SAP30 family. In terms of assembly, interacts with components of the histone deacetylase complex sin3a, hdac1 and hdac2. Binds histones and nucleosomes.

The protein localises to the nucleus. Its subcellular location is the nucleolus. Functions as a transcription repressor, probably via its interaction with histone deacetylase complexes. Involved in the functional recruitment of the class 1 Sin3-histone deacetylase complex (HDAC) to the nucleolus. Binds DNA, apparently without sequence-specificity, and bends bound double-stranded DNA. Binds phosphoinositol phosphates (phosphoinositol 3-phosphate, phosphoinositol 4-phosphate and phosphoinositol 5-phosphate) via the same basic sequence motif that mediates DNA binding and nuclear import. In Xenopus laevis (African clawed frog), this protein is Histone deacetylase complex subunit SAP30L-B (sap30l-b).